The following is a 479-amino-acid chain: GTPase Obg (479 aa).

The region spanning 2-159 (PRFVDRVVIH…RDLTLELKTV (158 aa)) is the Obg domain. The OBG-type G domain maps to 160-340 (ADVGLVGFPS…LIFGLSQMIS (181 aa)). GTP-binding positions include 166–173 (GFPSAGKS), 191–195 (FTTLV), 212–215 (DVPG), 292–295 (NKID), and 321–323 (STA). Mg(2+) is bound by residues S173 and T193. Residues 358–436 (PIPVDDSGFT…IGEMTFDWEP (79 aa)) enclose the OCT domain. A disordered region spans residues 434–479 (WEPQTPAGEPVAMSGRGTDPRLDSNKRVGAAERKAARSRRREHGDG). Residues 451-468 (TDPRLDSNKRVGAAERKA) show a composition bias toward basic and acidic residues. The span at 469-479 (ARSRRREHGDG) shows a compositional bias: basic residues.

It belongs to the TRAFAC class OBG-HflX-like GTPase superfamily. OBG GTPase family. As to quaternary structure, monomer. Mg(2+) serves as cofactor.

Its subcellular location is the cytoplasm. In terms of biological role, an essential GTPase which binds GTP, GDP and possibly (p)ppGpp with moderate affinity, with high nucleotide exchange rates and a fairly low GTP hydrolysis rate. Plays a role in control of the cell cycle, stress response, ribosome biogenesis and in those bacteria that undergo differentiation, in morphogenesis control. This Mycobacterium tuberculosis (strain ATCC 25177 / H37Ra) protein is GTPase Obg.